The primary structure comprises 894 residues: MARQKKMGQSVLRAVFFLVLGLLGHSHGGFPNTISIGGLFMRNTVQEHSAFRFAVQLYNTNQNTTEKPFHLNYHVDHLDSSNSFSVTNAFCSQFSRGVYAIFGFYDQMSMNTLTSFCGALHTSFVTPSFPTDADVQFVIQMRPALKGAILSLLGHYKWEKFVYLYDTERGFSILQAIMEAAVQNNWQVTARSVGNIKDVQEFRRIIEEMDRRQEKRYLIDCEVERINTILEQVVILGKHSRGYHYMLANLGFTDILLERVMHGGANITGFQIVNNENPMVQQFIQRWVRLDEREFPEAKNAPLKYTSALTHDAILVIAEAFRYLRRQRVDVSRRGSAGDCLANPAVPWSQGIDIERALKMVQVQGMTGNIQFDTYGRRTNYTIDVYEMKVSGSRKAGYWNEYERFVPFSDQQISNDSASSENRTIVVTTILESPYVMYKKNHEQLEGNERYEGYCVDLAYEIAKHVRIKYKLSIVGDGKYGARDPETKIWNGMVGELVYGRADIAVAPLTITLVREEVIDFSKPFMSLGISIMIKKPQKSKPGVFSFLDPLAYEIWMCIVFAYIGVSVVLFLVSRFSPYEWHLEDNNEEPRDPQSPPDPPNEFGIFNSLWFSLGAFMQQGCDISPRSLSGRIVGGVWWFFTLIIISSYTANLAAFLTVERMVSPIESAEDLAKQTEIAYGTLDSGSTKEFFRRSKIAVYEKMWSYMKSAEPSVFTKTTADGVARVRKSKGKFAFLLESTMNEYIEQRKPCDTMKVGGNLDSKGYGVATPKGSALRNAVNLAVLKLNEQGLLDKLKNKWWYDKGECGSGGGDSKDKTSALSLSNVAGVFYILVGGLGLAMMVALIEFCYKSRAESKRMKLTKNTQNFKPAPATNTQNYATYREGYNVYGTESVKI.

An N-terminal signal peptide occupies residues 1–28 (MARQKKMGQSVLRAVFFLVLGLLGHSHG). The Extracellular segment spans residues 29–552 (GFPNTISIGG…GVFSFLDPLA (524 aa)). N-linked (GlcNAc...) asparagine glycosylation is found at asparagine 63, asparagine 266, asparagine 380, asparagine 415, and asparagine 422. The cysteines at positions 91 and 340 are disulfide-linked. Proline 508, threonine 510, and arginine 515 together coordinate L-glutamate. The helical transmembrane segment at 553 to 573 (YEIWMCIVFAYIGVSVVLFLV) threads the bilayer. Topologically, residues 574–602 (SRFSPYEWHLEDNNEEPRDPQSPPDPPNE) are cytoplasmic. Residues 603–618 (FGIFNSLWFSLGAFMQ) constitute an intramembrane region (helical; Pore-forming). An intramembrane segment occupies 619–621 (QGC). Cysteine 621 carries the S-palmitoyl cysteine lipid modification. Residues 622-627 (DISPRS) lie on the Cytoplasmic side of the membrane. The chain crosses the membrane as a helical span at residues 628 to 648 (LSGRIVGGVWWFFTLIIISSY). At 649–823 (TANLAAFLTV…DKTSALSLSN (175 aa)) the chain is on the extracellular side. L-glutamate-binding residues include serine 686, threonine 687, and glutamate 737. The cysteines at positions 750 and 805 are disulfide-linked. A helical membrane pass occupies residues 824–844 (VAGVFYILVGGLGLAMMVALI). Residues 845 to 894 (EFCYKSRAESKRMKLTKNTQNFKPAPATNTQNYATYREGYNVYGTESVKI) lie on the Cytoplasmic side of the membrane. A lipid anchor (S-palmitoyl cysteine) is attached at cysteine 847. 2 positions are modified to phosphotyrosine: tyrosine 877 and tyrosine 887.

The protein belongs to the glutamate-gated ion channel (TC 1.A.10.1) family. GRIA3 subfamily. As to quaternary structure, homotetramer or heterotetramer of pore-forming glutamate receptor subunits. Tetramers may be formed by the dimerization of dimers. Interacts with PICK1, GRIP1 and GRIP2. Found in a complex with GRIA1, GRIA2, GRIA4, CNIH2, CNIH3, CACNG2, CACNG3, CACNG4, CACNG5, CACNG7 and CACNG8. Interacts with CACNG5. Found in a complex with GRIA1, GRIA2, GRIA4, DLG4, CACNG8 and CNIH2.

It localises to the cell membrane. It is found in the postsynaptic cell membrane. The protein localises to the postsynaptic density membrane. It catalyses the reaction Ca(2+)(in) = Ca(2+)(out). Ionotropic glutamate receptor that functions as a ligand-gated cation channel, gated by L-glutamate and glutamatergic agonists such as alpha-amino-3-hydroxy-5-methyl-4-isoxazolepropionic acid (AMPA), quisqualic acid, and kainic acid. L-glutamate acts as an excitatory neurotransmitter at many synapses in the central nervous system and plays an important role in fast excitatory synaptic transmission by inducing long-term potentiation. Binding of the excitatory neurotransmitter L-glutamate induces a conformation change, leading to the opening of the cation channel, and thereby converts the chemical signal to an electrical impulse upon entry of calcium. The receptor then desensitizes rapidly and enters a transient inactive state, characterized by the presence of bound agonist. In the presence of CACNG8, shows resensitization which is characterized by a delayed accumulation of current flux upon continued application of glutamate. The polypeptide is Glutamate receptor 3 (Homo sapiens (Human)).